The following is a 205-amino-acid chain: Rho-related GTP-binding protein RhoQ (205 aa).

16–23 (GDGAVGKT) lines the GTP pocket. Positions 38-46 (YVPTVFDHY) match the Effector region motif. GTP-binding positions include 63 to 67 (DTAGQ) and 121 to 124 (TQID). A Cysteine methyl ester modification is found at C202. The S-farnesyl cysteine moiety is linked to residue C202. Positions 203–205 (LIT) are cleaved as a propeptide — removed in mature form.

Belongs to the small GTPase superfamily. Rho family. Interacts with CDC42EP4 in a GTP-dependent manner. Interacts with ARHGAP33/TCGAP. Interacts with CDC42EP1, CDC42EP2, CDC42EP3, PARD6A, PARD6G (and probably PARD6B) in a GTP-dependent manner. Part of a quaternary complex containing PARD3, some PARD6 protein (PARD6A, PARD6B or PARD6G) and some atypical PKC protein (PRKCI or PRKCZ). Interacts with EXO70 in a GTP-dependent manner. Interacts with GOPC. In terms of processing, may be post-translationally modified by both palmitoylation and polyisoprenylation.

The protein resides in the cytoplasm. The protein localises to the cell membrane. Regulated by guanine nucleotide exchange factors (GEFs) which promote the exchange of bound GDP for free GTP, GTPase activating proteins (GAPs) which increase the GTP hydrolysis activity, and GDP dissociation inhibitors which inhibit the dissociation of the nucleotide from the GTPase. Plasma membrane-associated small GTPase which cycles between an active GTP-bound and an inactive GDP-bound state. In active state binds to a variety of effector proteins to regulate cellular responses. Involved in epithelial cell polarization processes. May play a role in CFTR trafficking to the plasma membrane. Causes the formation of thin, actin-rich surface projections called filopodia. The protein is Rho-related GTP-binding protein RhoQ (RHOQ) of Homo sapiens (Human).